A 20-amino-acid polypeptide reads, in one-letter code: Tetracycline resistance leader peptide (20 aa).

This is Tetracycline resistance leader peptide (tetL) from Bacillus cereus.